Here is a 342-residue protein sequence, read N- to C-terminus: tRNA dimethylallyltransferase (342 aa).

Residue 39–46 coordinates ATP; the sequence is GPTGSGKT. 41 to 46 is a substrate binding site; it reads TGSGKT. The segment at 64–67 is interaction with substrate tRNA; sequence DSMQ.

This sequence belongs to the IPP transferase family. Monomer. Mg(2+) serves as cofactor.

The enzyme catalyses adenosine(37) in tRNA + dimethylallyl diphosphate = N(6)-dimethylallyladenosine(37) in tRNA + diphosphate. In terms of biological role, catalyzes the transfer of a dimethylallyl group onto the adenine at position 37 in tRNAs that read codons beginning with uridine, leading to the formation of N6-(dimethylallyl)adenosine (i(6)A). The chain is tRNA dimethylallyltransferase from Chlamydia caviae (strain ATCC VR-813 / DSM 19441 / 03DC25 / GPIC) (Chlamydophila caviae).